The chain runs to 437 residues: Nuclear envelope integral membrane protein 1 (437 aa).

The signal sequence occupies residues 1 to 44 (MAGGIKVSVWSAVGPGPRCWGAGGGGGATWLLLVVAGCVVCGSA). The N-linked (GlcNAc...) asparagine glycan is linked to asparagine 123. 5 consecutive transmembrane segments (helical) span residues 159–179 (PKLF…DLLS), 183–203 (IFYY…IVIF), 214–234 (PIYV…QLVF), 244–264 (YWHY…AVCY), and 288–308 (GLMY…VIAL). Positions 184–295 (FYYSTGMSVG…GLGLMYSSIQ (112 aa)) are a; required for its colocalization with lamins at the nuclear envelope. The segment at 334–403 (PVPPRLLTEE…LTPNEVSVHE (70 aa)) is b; required for interaction with RAN-GTP. The segment at 334–437 (PVPPRLLTEE…PTFTQNNFLT (104 aa)) is required for nuclear localization. Serine 366, serine 419, and serine 420 each carry phosphoserine. Acidic residues predominate over residues 415 to 425 (DEELSSEEEGS). Residues 415–437 (DEELSSEEEGSEYPTFTQNNFLT) form a disordered region. A compositionally biased stretch (polar residues) spans 428 to 437 (PTFTQNNFLT).

The protein belongs to the NEMP family. As to quaternary structure, homooligomer. Interacts with RAN-GTP. Interacts with EMD. Phosphorylated. Phosphorylation may regulate its interaction with RAN-GTP. In terms of tissue distribution, in the ovary, expression is strongest in primordial follicle oocytes and rapidly declines as oocytes mature and move from the cortex (at protein level).

The protein localises to the nucleus inner membrane. Its subcellular location is the nucleus envelope. Together with EMD, contributes to nuclear envelope stiffness in germ cells. Required for female fertility. Essential for normal erythropoiesis. Required for efficient nuclear envelope opening and enucleation during the late stages of erythroblast maturation. The chain is Nuclear envelope integral membrane protein 1 (Nemp1) from Mus musculus (Mouse).